The following is a 262-amino-acid chain: MLIHPQFDPAAIRIGSFAIHWYGLMYLMAFVQFLLLGRLRIRAPRYQALGWTYKYLEDLLFAGVLGVVLGGRLGYTLFYMPGFYLANPLGIFKIWEGGMSFHGGLLGVLAALYWFAKKRKTTFFVVSDLVAPLVPFGLAFGRLGNFINGELWGRPTDLPWAMAFPLVDSVPRHPSQIYQLLGEGVLLGIALWFYAGKSRRVGQVSGFFLLGYGICRFLAEYAREPDAFLGLLGLGLSMGQWLCVPMIFFGIYLMTTFKSKSK.

Helical transmembrane passes span 17 to 37, 59 to 79, 94 to 114, and 121 to 141; these read FAIH…LLLG, LLFA…TLFY, IWEG…ALYW, and TTFF…LAFG. R142 is a binding site for a 1,2-diacyl-sn-glycero-3-phospho-(1'-sn-glycerol). A run of 3 helical transmembrane segments spans residues 176–196, 201–221, and 231–251; these read QIYQ…FYAG, VGQV…LAEY, and LLGL…FFGI.

The protein belongs to the Lgt family.

The protein resides in the cell inner membrane. It catalyses the reaction L-cysteinyl-[prolipoprotein] + a 1,2-diacyl-sn-glycero-3-phospho-(1'-sn-glycerol) = an S-1,2-diacyl-sn-glyceryl-L-cysteinyl-[prolipoprotein] + sn-glycerol 1-phosphate + H(+). It functions in the pathway protein modification; lipoprotein biosynthesis (diacylglyceryl transfer). Its function is as follows. Catalyzes the transfer of the diacylglyceryl group from phosphatidylglycerol to the sulfhydryl group of the N-terminal cysteine of a prolipoprotein, the first step in the formation of mature lipoproteins. This Polynucleobacter necessarius subsp. necessarius (strain STIR1) protein is Phosphatidylglycerol--prolipoprotein diacylglyceryl transferase.